The sequence spans 241 residues: Lipoprotein-releasing system ATP-binding protein LolD 2 (241 aa).

Residues 6-241 (LDAQQLSKSY…YKSYEKSTAV (236 aa)) form the ABC transporter domain. Residue 43 to 50 (GASGSGKT) participates in ATP binding.

The protein belongs to the ABC transporter superfamily. Lipoprotein translocase (TC 3.A.1.125) family. The complex is composed of two ATP-binding proteins (LolD) and two transmembrane proteins (LolC and LolE).

The protein resides in the cell inner membrane. In terms of biological role, part of the ABC transporter complex LolCDE involved in the translocation of mature outer membrane-directed lipoproteins, from the inner membrane to the periplasmic chaperone, LolA. Responsible for the formation of the LolA-lipoprotein complex in an ATP-dependent manner. The chain is Lipoprotein-releasing system ATP-binding protein LolD 2 from Chlorobium chlorochromatii (strain CaD3).